Reading from the N-terminus, the 360-residue chain is DNA replication and repair protein RecF (360 aa).

Residue 30–37 participates in ATP binding; sequence GANGSGKT.

It belongs to the RecF family.

It localises to the cytoplasm. Functionally, the RecF protein is involved in DNA metabolism; it is required for DNA replication and normal SOS inducibility. RecF binds preferentially to single-stranded, linear DNA. It also seems to bind ATP. This chain is DNA replication and repair protein RecF, found in Acinetobacter baumannii (strain ATCC 17978 / DSM 105126 / CIP 53.77 / LMG 1025 / NCDC KC755 / 5377).